The primary structure comprises 572 residues: MFASQHATFNHVWSSLLLEELHRLGVRDIALASGSRSAPLTMAAAAHAGFRRHLHFDERGLGFMALGLAKGSGRPVAVIMTSGTAVANLWPAVAEAQLTGVPLIILSADRPPELIDNGANQAIDQQGIFGRYPVYQQNLPSPTPTIPAAFVLSSVDQVLAQQALTPGPVHFNCMYPEPLYPGDEYLDFSGYLAPLGDWLHSSEPWSPWQQNEQICPRQPDWAALQGKRGIIVAGRIQDPAQAQVVAELAERLGWPLLADLQSQIRFDARNLIHMDLALQNSCFVAELARAEVLLQFGARLISKRLGQFIKQHPWQDYWLVDPQPARLDPDYRLRRRLVCEPAAFAATHKVSTRHLPWHRLAERQQSATRQIRSACDRFSELGVCHRLGNLIQGQLFVGNSMPARLMDMLGEAGKGPSRVMTNRGASGIDGLIATAYGFAQSSEQPTTLLIGDLSALHDLNSLALLGKSSRPLVVILLNNDGGSIFRMLPVPTGDRLLETYYCLPHGLHFEHAAAMFGLHYRAPTTLAEFEQAYTAALKKPELEKKVTLIEIKVPSSEVAEDLKALGAAIRGL.

Belongs to the TPP enzyme family. MenD subfamily. Homodimer. The cofactor is Mg(2+). Mn(2+) is required as a cofactor. It depends on thiamine diphosphate as a cofactor.

The catalysed reaction is isochorismate + 2-oxoglutarate + H(+) = 5-enolpyruvoyl-6-hydroxy-2-succinyl-cyclohex-3-ene-1-carboxylate + CO2. It participates in quinol/quinone metabolism; 1,4-dihydroxy-2-naphthoate biosynthesis; 1,4-dihydroxy-2-naphthoate from chorismate: step 2/7. It functions in the pathway quinol/quinone metabolism; menaquinone biosynthesis. Functionally, catalyzes the thiamine diphosphate-dependent decarboxylation of 2-oxoglutarate and the subsequent addition of the resulting succinic semialdehyde-thiamine pyrophosphate anion to isochorismate to yield 2-succinyl-5-enolpyruvyl-6-hydroxy-3-cyclohexene-1-carboxylate (SEPHCHC). This is 2-succinyl-5-enolpyruvyl-6-hydroxy-3-cyclohexene-1-carboxylate synthase from Aeromonas salmonicida (strain A449).